Consider the following 520-residue polypeptide: Poly(A)-specific ribonuclease PNLDC1 (520 aa).

4 residues coordinate Mg(2+): Asp17, Glu19, Asp260, and Asp354. The helical transmembrane segment at 495 to 515 (VNCLLQVCGIVTAWALLAFIL) threads the bilayer.

It belongs to the CAF1 family. Mg(2+) serves as cofactor.

Its subcellular location is the endoplasmic reticulum membrane. It catalyses the reaction Exonucleolytic cleavage of poly(A) to 5'-AMP.. In terms of biological role, 3'-exoribonuclease that has a preference for poly(A) tails of mRNAs, thereby efficiently degrading poly(A) tails. Exonucleolytic degradation of the poly(A) tail is often the first step in the decay of eukaryotic mRNAs and is also used to silence certain maternal mRNAs translationally during oocyte maturation and early embryonic development. May act as a regulator of multipotency in embryonic stem cells. Is a critical factor for proper spermatogenesis, involved in pre-piRNAs processing to generate mature piRNAs. The sequence is that of Poly(A)-specific ribonuclease PNLDC1 from Homo sapiens (Human).